A 590-amino-acid chain; its full sequence is Aspartate--tRNA(Asp/Asn) ligase (590 aa).

Position 169 (Glu169) interacts with L-aspartate. An aspartate region spans residues 193-196; it reads QLFK. Arg215 lines the L-aspartate pocket. Residues 215–217 and Gln224 each bind ATP; that span reads RDE. An L-aspartate-binding site is contributed by His447. Residue Glu479 participates in ATP binding. Position 486 (Arg486) interacts with L-aspartate. Position 531 to 534 (531 to 534) interacts with ATP; sequence GWDR. The interval 556–590 is disordered; the sequence is GGFDPLTAAPAPITPEQRKEAGVDARPQQDLPPQS.

It belongs to the class-II aminoacyl-tRNA synthetase family. Type 1 subfamily. Homodimer.

The protein localises to the cytoplasm. It carries out the reaction tRNA(Asx) + L-aspartate + ATP = L-aspartyl-tRNA(Asx) + AMP + diphosphate. In terms of biological role, aspartyl-tRNA synthetase with relaxed tRNA specificity since it is able to aspartylate not only its cognate tRNA(Asp) but also tRNA(Asn). Reaction proceeds in two steps: L-aspartate is first activated by ATP to form Asp-AMP and then transferred to the acceptor end of tRNA(Asp/Asn). This Nocardioides sp. (strain ATCC BAA-499 / JS614) protein is Aspartate--tRNA(Asp/Asn) ligase.